The following is a 93-amino-acid chain: Pyrimidine/purine nucleoside phosphorylase (93 aa).

It belongs to the nucleoside phosphorylase PpnP family.

It catalyses the reaction a purine D-ribonucleoside + phosphate = a purine nucleobase + alpha-D-ribose 1-phosphate. It carries out the reaction adenosine + phosphate = alpha-D-ribose 1-phosphate + adenine. The enzyme catalyses cytidine + phosphate = cytosine + alpha-D-ribose 1-phosphate. The catalysed reaction is guanosine + phosphate = alpha-D-ribose 1-phosphate + guanine. It catalyses the reaction inosine + phosphate = alpha-D-ribose 1-phosphate + hypoxanthine. It carries out the reaction thymidine + phosphate = 2-deoxy-alpha-D-ribose 1-phosphate + thymine. The enzyme catalyses uridine + phosphate = alpha-D-ribose 1-phosphate + uracil. The catalysed reaction is xanthosine + phosphate = alpha-D-ribose 1-phosphate + xanthine. Catalyzes the phosphorolysis of diverse nucleosides, yielding D-ribose 1-phosphate and the respective free bases. Can use uridine, adenosine, guanosine, cytidine, thymidine, inosine and xanthosine as substrates. Also catalyzes the reverse reactions. The polypeptide is Pyrimidine/purine nucleoside phosphorylase (Pseudoalteromonas atlantica (strain T6c / ATCC BAA-1087)).